The sequence spans 488 residues: N-succinylglutamate 5-semialdehyde dehydrogenase (488 aa).

Position 221–226 (221–226) interacts with NAD(+); sequence GSSRTG. Active-site residues include Glu-244 and Cys-278.

It belongs to the aldehyde dehydrogenase family. AstD subfamily.

The catalysed reaction is N-succinyl-L-glutamate 5-semialdehyde + NAD(+) + H2O = N-succinyl-L-glutamate + NADH + 2 H(+). Its pathway is amino-acid degradation; L-arginine degradation via AST pathway; L-glutamate and succinate from L-arginine: step 4/5. Catalyzes the NAD-dependent reduction of succinylglutamate semialdehyde into succinylglutamate. This is N-succinylglutamate 5-semialdehyde dehydrogenase from Pseudomonas syringae pv. tomato (strain ATCC BAA-871 / DC3000).